The chain runs to 84 residues: RNA-binding protein Hfq (84 aa).

Positions 9–68 (DPYLNTLRKERVPVSIYLVNGIKLQGQIESFDQFVILLKNTVSQMVYKHAISTVVPGRPV) constitute a Sm domain.

The protein belongs to the Hfq family. In terms of assembly, homohexamer.

Its function is as follows. RNA chaperone that binds small regulatory RNA (sRNAs) and mRNAs to facilitate mRNA translational regulation in response to envelope stress, environmental stress and changes in metabolite concentrations. Also binds with high specificity to tRNAs. In Stutzerimonas stutzeri (strain A1501) (Pseudomonas stutzeri), this protein is RNA-binding protein Hfq.